Reading from the N-terminus, the 94-residue chain is ERRCDPRRLSDCEDFVRGRSKGGRGEKECRLSERCCTELQKMPRECRCEAVEGMYKEAERKERGEGEQRQRLERARALPGLCSIEPSYCEIRPS.

3 cysteine pairs are disulfide-bonded: C12/C35, C36/C82, and C48/C89.

The protein belongs to the 2S seed storage albumins family. As to expression, expressed in seeds (at protein level).

Cysteine protease inhibitor that likely functions in defense against insects by inhibiting cysteine proteases in the midgut of herbivore insects such as C.maculatus. Selectively inhibits cathepsin L, as well as papain, ficin and bromelain with lower efficiency. Shows antitumor activity, inhibiting the growth of prostate cancer cell lines PC3 and DU145, and the gastric cancer cell line Hs746T. No activity against cathepsin B or serine proteases (trypsin, human plasma kallikrein and elastase). The polypeptide is 2S albumin-like cysteine protease inhibitor (Araucaria angustifolia (Brazilian pine tree)).